The primary structure comprises 524 residues: mRNA cap guanine-N(7) methyltransferase (524 aa).

The interval 1–155 is disordered; the sequence is MSDKEAGVAS…DKKRAHDEAE (155 aa). Basic and acidic residues predominate over residues 19–40; it reads NKDEVDVKNTEEHSKQESKSDI. Over residues 68–77 the composition is skewed to polar residues; sequence NNKVISSVYN. Basic and acidic residues predominate over residues 90–99; it reads KTTDKYDKYG. Over residues 100–112 the composition is skewed to polar residues; that stretch reads SRSTPIATPTAPV. An mRNA cap 0 methyltransferase domain is found at 214-522; it reads SPIYKLRNFN…FYIGFVFEKL (309 aa). MRNA is bound at residue 223–224; the sequence is NN. S-adenosyl-L-methionine-binding residues include Lys-227, Cys-251, Asp-273, Asp-319, Gln-349, and Tyr-354.

Belongs to the class I-like SAM-binding methyltransferase superfamily. mRNA cap 0 methyltransferase family.

It localises to the nucleus. The enzyme catalyses a 5'-end (5'-triphosphoguanosine)-ribonucleoside in mRNA + S-adenosyl-L-methionine = a 5'-end (N(7)-methyl 5'-triphosphoguanosine)-ribonucleoside in mRNA + S-adenosyl-L-homocysteine. Its function is as follows. Responsible for methylating the 5'-cap structure of mRNAs. The polypeptide is mRNA cap guanine-N(7) methyltransferase (ABD1) (Debaryomyces hansenii (strain ATCC 36239 / CBS 767 / BCRC 21394 / JCM 1990 / NBRC 0083 / IGC 2968) (Yeast)).